The chain runs to 56 residues: uncharacterized protein (56 aa).

Residues isoleucine 33–isoleucine 53 form a helical membrane-spanning segment.

The protein localises to the host membrane. This is an uncharacterized protein from Bos taurus (Bovine).